We begin with the raw amino-acid sequence, 390 residues long: Chorismate synthase 2 (390 aa).

Arg-39 and Arg-45 together coordinate NADP(+). Residues 132–134, 253–254, Gly-298, 313–317, and Arg-339 contribute to the FMN site; these read RSS, NA, and KPIPT.

It belongs to the chorismate synthase family. As to quaternary structure, homotetramer. It depends on FMNH2 as a cofactor.

It carries out the reaction 5-O-(1-carboxyvinyl)-3-phosphoshikimate = chorismate + phosphate. It functions in the pathway metabolic intermediate biosynthesis; chorismate biosynthesis; chorismate from D-erythrose 4-phosphate and phosphoenolpyruvate: step 7/7. Catalyzes the anti-1,4-elimination of the C-3 phosphate and the C-6 proR hydrogen from 5-enolpyruvylshikimate-3-phosphate (EPSP) to yield chorismate, which is the branch point compound that serves as the starting substrate for the three terminal pathways of aromatic amino acid biosynthesis. This reaction introduces a second double bond into the aromatic ring system. This Bacillus thuringiensis (strain Al Hakam) protein is Chorismate synthase 2.